Reading from the N-terminus, the 518-residue chain is MQASRRTKRDSIPNLYAKCQLSGNCLPDVKNKVEADTLADRLLRWLGSVIYLGGLGIGTGRGSGGSSGYNPLGAPSRVTPSGTVIRPTVPVEGLGPSEIIPVDVVNPGSSSVVPLEDLTVPEVTIDSGEVGGGGLHPSEIDVVTSSDPISDVTGTSSHPTIISGEDNAIAVLDVSPTEPPTKRIALGTRGATSTPHISVISGTTEFGQSSDLNVFVNATFSGDSIGYTEEIPLEELNTIQQFEIETPPKTSTPRETIGRALERARDLYNRRVQQIATRNPAMLGQPSRAIVFGFENPAFDADITQVFERDLEQVAAAPDADFADIVRIGRPRFSQTDTGQIRISRLGRRGTIKTRSGLQIGQAVHFYYDLSTIDTADAIELSTLGQHSGEQSIVDAMIESSFVDPFETPDPTYTEEQQLLDPLTEDFSNSHLVLTSSRRGSSFSIPTIPPGLGLRIYVDDVGSDLFVSYPETRVIPAGGLPTEPFTPLEPPFFSEFYSSDFVYRPSLYRKKRKRSDIF.

The Nuclear localization signal motif lies at 1–10 (MQASRRTKRD). C19 and C25 are joined by a disulfide. A Nuclear localization signal motif is present at residues 509 to 515 (RKKRKRS).

Belongs to the papillomaviridae L2 protein family. As to quaternary structure, interacts with major capsid protein L1. Interacts with E2; this interaction inhibits E2 transcriptional activity but not the DNA replication function E2. Interacts with host GADD45GIP1. Interacts with host HSPA8; this interaction is required for L2 nuclear translocation. Interacts with host importins KPNB2 and KPNB3. Forms a complex with importin alpha2-beta1 heterodimers via interaction with the importin alpha2 adapter. Interacts with host DYNLT1; this interaction is essential for virus intracellular transport during entry. Interacts (via C-terminus) with host retromer subunits VPS35 and VPS29. Post-translationally, highly phosphorylated.

It is found in the virion. The protein resides in the host nucleus. The protein localises to the host early endosome. It localises to the host Golgi apparatus. In terms of biological role, minor protein of the capsid that localizes along the inner surface of the virion, within the central cavities beneath the L1 pentamers. Plays a role in capsid stabilization through interaction with the major capsid protein L1. Once the virion enters the host cell, L2 escorts the genomic DNA into the nucleus by promoting escape from the endosomal compartments and traffic through the host Golgi network. Mechanistically, the C-terminus of L2 possesses a cell-penetrating peptide that protudes from the host endosome, interacts with host cytoplasmic retromer cargo and thereby mediates the capsid delivery to the host trans-Golgi network. Plays a role through its interaction with host dynein in the intracellular microtubule-dependent transport of viral capsid toward the nucleus. Mediates the viral genome import into the nucleus through binding to host importins. Once within the nucleus, L2 localizes viral genomes to host PML bodies in order to activate early gene expression for establishment of infection. Later on, promotes late gene expression by interacting with the viral E2 protein and by inhibiting its transcriptional activation functions. During virion assembly, encapsidates the genome by direct interaction with the viral DNA. This is Minor capsid protein L2 from Homo sapiens (Human).